Reading from the N-terminus, the 78-residue chain is RNA-binding protein Hfq (78 aa).

A Sm domain is found at 10 to 69 (DPFLNALRKEHVPVSIYLVNGIKLQGHIESFDQYVVLLRNTVTQMVYKHAISTVVPARAV).

The protein belongs to the Hfq family. In terms of assembly, homohexamer.

Its function is as follows. RNA chaperone that binds small regulatory RNA (sRNAs) and mRNAs to facilitate mRNA translational regulation in response to envelope stress, environmental stress and changes in metabolite concentrations. Also binds with high specificity to tRNAs. This chain is RNA-binding protein Hfq, found in Herminiimonas arsenicoxydans.